The following is a 206-amino-acid chain: Small ribosomal subunit protein uS4 (206 aa).

The 58-residue stretch at 98–155 folds into the S4 RNA-binding domain; sequence TRLDNVVYRLGWALSRAQARQIVSHGKIAVNGKRVNIPSYNLKPGDVVELLDKDLIPV.

It belongs to the universal ribosomal protein uS4 family. Part of the 30S ribosomal subunit. Contacts protein S5. The interaction surface between S4 and S5 is involved in control of translational fidelity.

One of the primary rRNA binding proteins, it binds directly to 16S rRNA where it nucleates assembly of the body of the 30S subunit. Functionally, with S5 and S12 plays an important role in translational accuracy. This Dictyoglomus turgidum (strain DSM 6724 / Z-1310) protein is Small ribosomal subunit protein uS4.